The sequence spans 344 residues: Small neutral protease regulatory protein (344 aa).

Residues 1 to 60 (MELEVRHLRALCAIADAGSLHRAARRLGVAQPTLSTQLTRIEQALGGPLFTRERTGCRPT) enclose the HTH lysR-type domain. The segment at residues 20–39 (LHRAARRLGVAQPTLSTQLT) is a DNA-binding region (H-T-H motif). The segment at 322–344 (SCGRAEGSRSRRPRDVAPPRPIG) is disordered. Residues 327 to 338 (EGSRSRRPRDVA) are compositionally biased toward basic and acidic residues.

Belongs to the LysR transcriptional regulatory family.

In terms of biological role, transcriptional activator of the gene (snpA) for the small neutral protease. The sequence is that of Small neutral protease regulatory protein (mprR) from Streptomyces lividans.